Here is a 396-residue protein sequence, read N- to C-terminus: Purine ribonucleoside efflux pump NepI (396 aa).

At 1 to 21 the chain is on the cytoplasmic side; it reads MSEFIAENRGADAITRPNWSA. The helical transmembrane segment at 22–42 threads the bilayer; that stretch reads VFSVAFCVACLIIVEFLPVSL. Residues 43 to 54 are Periplasmic-facing; it reads LTPMAQDLGISE. Residues 55 to 75 traverse the membrane as a helical segment; sequence GVAGQSVTVTAFVAMFASLFI. Residues 76–85 are Cytoplasmic-facing; it reads TQTIQATDRR. The chain crosses the membrane as a helical span at residues 86–106; sequence YVVILFAVLLTLSCLLVSFAN. Ser107 is a topological domain (periplasmic). A helical transmembrane segment spans residues 108–128; sequence FSLLLIGRACLGLALGGFWAM. Topologically, residues 129-147 are cytoplasmic; the sequence is SASLTMRLVPPRTVPKALS. Residues 148–168 traverse the membrane as a helical segment; it reads VIFGAVSIALVIAAPLGCFLG. The Periplasmic segment spans residues 169-175; that stretch reads ELIGWRN. The chain crosses the membrane as a helical span at residues 176–196; the sequence is VFNAAAAMGVLCIFWIIKSLP. Residues 197–215 are Cytoplasmic-facing; it reads SLPGEPSHQKQNTFRLLQR. A helical transmembrane segment spans residues 216-236; that stretch reads PGVMAGMIAIFMSFAGQFAFF. Residues 237–255 are Periplasmic-facing; that stretch reads TYIRPVYMTLAGFGVDGLT. The chain crosses the membrane as a helical span at residues 256-276; it reads LVLLSFGIASFVGTSLSSFIL. Over 277–281 the chain is Cytoplasmic; it reads KRSVK. The helical transmembrane segment at 282–302 threads the bilayer; the sequence is LALAGAPFVLALSALVLTLWG. Topologically, residues 303 to 305 are periplasmic; the sequence is SDK. A helical membrane pass occupies residues 306-326; it reads IVATGVAIIWGLTFALIPVGW. The Cytoplasmic portion of the chain corresponds to 327–343; sequence STWITRSLADQAEKAGS. A helical membrane pass occupies residues 344 to 364; the sequence is IQVAVIQLANTCGAAIGGYAL. Topologically, residues 365–366 are periplasmic; sequence DN. Residues 367–387 form a helical membrane-spanning segment; that stretch reads IGLTSPLMLSGTLMLLTALLV. Over 388 to 396 the chain is Cytoplasmic; that stretch reads TAKVKMKKS.

The protein belongs to the major facilitator superfamily. DHA1 family. NepI (TC 2.A.1.2.26) subfamily.

The protein localises to the cell inner membrane. It carries out the reaction inosine(in) + H(+)(out) = inosine(out) + H(+)(in). The enzyme catalyses guanosine(in) + H(+)(out) = guanosine(out) + H(+)(in). Its function is as follows. Involved in the efflux of purine ribonucleosides, such as inosine and guanosine. In Escherichia coli O157:H7, this protein is Purine ribonucleoside efflux pump NepI.